We begin with the raw amino-acid sequence, 331 residues long: Ribose-phosphate pyrophosphokinase (331 aa).

55-57 (DGE) contributes to the ATP binding site. Residues His148 and Asp187 each contribute to the Mg(2+) site. The active site involves Lys211. Residues Arg213, Asp237, and 241–245 (DTGGT) each bind D-ribose 5-phosphate.

It belongs to the ribose-phosphate pyrophosphokinase family. Class I subfamily. In terms of assembly, homohexamer. It depends on Mg(2+) as a cofactor.

The protein localises to the cytoplasm. It carries out the reaction D-ribose 5-phosphate + ATP = 5-phospho-alpha-D-ribose 1-diphosphate + AMP + H(+). It participates in metabolic intermediate biosynthesis; 5-phospho-alpha-D-ribose 1-diphosphate biosynthesis; 5-phospho-alpha-D-ribose 1-diphosphate from D-ribose 5-phosphate (route I): step 1/1. Functionally, involved in the biosynthesis of the central metabolite phospho-alpha-D-ribosyl-1-pyrophosphate (PRPP) via the transfer of pyrophosphoryl group from ATP to 1-hydroxyl of ribose-5-phosphate (Rib-5-P). This is Ribose-phosphate pyrophosphokinase from Parasynechococcus marenigrum (strain WH8102).